The following is a 1421-amino-acid chain: ALK tyrosine kinase receptor homolog scd-2 (1421 aa).

An N-terminal signal peptide occupies residues 1–20 (MRKRRLWWFVVLFRVTLVGA). Over 21 to 903 (ILPNETFDVR…DTCEEIQIWT (883 aa)) the chain is Extracellular. N-linked (GlcNAc...) asparagine glycans are attached at residues N24, N44, N70, N83, N119, and N201. Positions 300–338 (QCSRGDQFLCSISANTRCLQNAQCDSRIDCDDESDEMDC) constitute an LDL-receptor class A domain. 3 disulfides stabilise this stretch: C301–C317, C309–C329, and C323–C338. The MAM domain occupies 339 to 542 (GNINGTMCDF…NLSFSPTCFE (204 aa)). Residues N342, N362, N495, N533, N546, N633, N726, N793, N849, N873, and N893 are each glycosylated (N-linked (GlcNAc...) asparagine). A helical transmembrane segment spans residues 904–924 (LYNITFLIFAALTIIGALFVV). Over 925 to 1421 (YHYRNREKQM…SVPLLECQTR (497 aa)) the chain is Cytoplasmic. Positions 976–1261 (IERGRVLGRG…GMPFPIHPAV (286 aa)) constitute a Protein kinase domain. ATP-binding positions include 982–990 (LGRGNFGEV) and K1003. The active-site Proton acceptor is D1106.

It belongs to the protein kinase superfamily. Tyr protein kinase family. Insulin receptor subfamily. As to quaternary structure, interacts (via cytoplasmic domain) with fsn-1 (via SPRY domain). As to expression, expressed in AIA sensory neurons.

The protein localises to the cell membrane. It catalyses the reaction L-tyrosyl-[protein] + ATP = O-phospho-L-tyrosyl-[protein] + ADP + H(+). Functionally, probable tyrosine-protein kinase receptor which regulates the dauer/non-dauer developmental decision probably by controlling daf-3 transcriptional activity in parallel or together with the TGF-beta pathway. Regulates integration of conflicting sensory cues in AIA interneurons. May act as a receptor for hen-1. In AWA neurons, together with hen-1, plays a role in regulating olfactory adaptation by controlling the forgetting sensory responses to odorants such as diacetyl. This Caenorhabditis elegans protein is ALK tyrosine kinase receptor homolog scd-2.